A 413-amino-acid polypeptide reads, in one-letter code: uncharacterized protein (413 aa).

Disordered stretches follow at residues 108–158 and 232–257; these read ESVP…SKIS and DRLG…RLGA. Position 115 is a phosphoserine (S115). Positions 127 to 139 are enriched in polar residues; sequence SAASRMIANSLNH. S141 bears the Phosphoserine mark. K239 is covalently cross-linked (Glycyl lysine isopeptide (Lys-Gly) (interchain with G-Cter in SUMO2)). Phosphoserine is present on residues S269 and S296. The tract at residues 290–336 is disordered; the sequence is RGPTKASAQPALTVKAKAASSATSTATTPKLRRLALPSRPGLQKKPD. Positions 302–318 are enriched in low complexity; that stretch reads TVKAKAASSATSTATTP. Phosphoserine is present on S342.

This is an uncharacterized protein from Mus musculus (Mouse).